We begin with the raw amino-acid sequence, 204 residues long: UPF0056 membrane protein TC_0241 (204 aa).

Helical transmembrane passes span 8-28, 46-66, 68-88, 107-127, 138-158, and 176-196; these read LTLLFYALFNSLGSLPVFVAL, IFALLTLILFITFGQGFFRLL, VSLPAFQLTGGILLGSLAINM, IFYPLAFPVITGPATITSTLG, LVLGAIMLAWAFSLITLFFSS, and FGISLALMAGNLMLKAISTAF.

Belongs to the UPF0056 (MarC) family.

The protein localises to the cell membrane. In Chlamydia muridarum (strain MoPn / Nigg), this protein is UPF0056 membrane protein TC_0241.